A 460-amino-acid chain; its full sequence is ATP synthase subunit beta (460 aa).

150 to 157 is an ATP binding site; it reads GGAGVGKT.

Belongs to the ATPase alpha/beta chains family. F-type ATPases have 2 components, CF(1) - the catalytic core - and CF(0) - the membrane proton channel. CF(1) has five subunits: alpha(3), beta(3), gamma(1), delta(1), epsilon(1). CF(0) has three main subunits: a(1), b(2) and c(9-12). The alpha and beta chains form an alternating ring which encloses part of the gamma chain. CF(1) is attached to CF(0) by a central stalk formed by the gamma and epsilon chains, while a peripheral stalk is formed by the delta and b chains.

Its subcellular location is the cell inner membrane. It carries out the reaction ATP + H2O + 4 H(+)(in) = ADP + phosphate + 5 H(+)(out). Its function is as follows. Produces ATP from ADP in the presence of a proton gradient across the membrane. The catalytic sites are hosted primarily by the beta subunits. The protein is ATP synthase subunit beta of Proteus mirabilis (strain HI4320).